A 378-amino-acid chain; its full sequence is MGQSKKLNKQPNSLSPLVQLAGIRKCFDGKEVIPQLDLTINNGEFLTLLGPSGCGKTTVLRLIAGLETVDSGRIMLDNEDITHVPAENRYVNTVFQSYALFPHMTVFENVAFGLRMQKTPAAEITPRVMEALRMVQLETFAQRKPHQLSGGQQQRVAIARAVVNKPRLLLLDESLSALDYKLRKQMQNELKALQRKLGITFVFVTHDQEEALTMSDRIVVMRDGRIEQDGTPREIYEEPKNLFVAGFIGEINMFNATVIERLDEQRVRANVEGRECNIYVNFAVEPGQKLHVLLRPEDLRVEEINDDNHAEGLIGYVRERNYKGMTLESVVELENGKMVMVSEFFNEDDPDFDHSLDQKMAINWVESWEVVLADEEHK.

An ABC transporter domain is found at 18-248 (VQLAGIRKCF…PKNLFVAGFI (231 aa)). Position 50-57 (50-57 (GPSGCGKT)) interacts with ATP.

It belongs to the ABC transporter superfamily. Spermidine/putrescine importer (TC 3.A.1.11.1) family. As to quaternary structure, the complex is composed of two ATP-binding proteins (PotA), two transmembrane proteins (PotB and PotC) and a solute-binding protein (PotD).

The protein localises to the cell inner membrane. It carries out the reaction ATP + H2O + polyamine-[polyamine-binding protein]Side 1 = ADP + phosphate + polyamineSide 2 + [polyamine-binding protein]Side 1.. In terms of biological role, part of the ABC transporter complex PotABCD involved in spermidine/putrescine import. Responsible for energy coupling to the transport system. The protein is Spermidine/putrescine import ATP-binding protein PotA of Escherichia coli O1:K1 / APEC.